A 119-amino-acid polypeptide reads, in one-letter code: Flagellar transcriptional regulator FlhD (119 aa).

The protein belongs to the FlhD family. As to quaternary structure, homodimer; disulfide-linked. Forms a heterohexamer composed of two FlhC and four FlhD subunits. Each FlhC binds a FlhD dimer, forming a heterotrimer, and a hexamer assembles by dimerization of two heterotrimers.

The protein resides in the cytoplasm. Its function is as follows. Functions in complex with FlhC as a master transcriptional regulator that regulates transcription of several flagellar and non-flagellar operons by binding to their promoter region. Activates expression of class 2 flagellar genes, including fliA, which is a flagellum-specific sigma factor that turns on the class 3 genes. Also regulates genes whose products function in a variety of physiological pathways. This chain is Flagellar transcriptional regulator FlhD, found in Escherichia fergusonii (strain ATCC 35469 / DSM 13698 / CCUG 18766 / IAM 14443 / JCM 21226 / LMG 7866 / NBRC 102419 / NCTC 12128 / CDC 0568-73).